The following is a 202-amino-acid chain: Recoverin (202 aa).

Glycine 2 is lipidated: N-myristoyl glycine. Residue cysteine 39 is modified to Cysteine sulfenic acid (-SOH). 4 EF-hand domains span residues serine 41–glutamate 59, aspartate 61–glycine 96, lysine 97–methionine 132, and threonine 147–isoleucine 182. Residues aspartate 74, asparagine 76, aspartate 78, threonine 80, glutamate 85, aspartate 110, aspartate 112, asparagine 114, and glutamate 121 each coordinate Ca(2+). Residues glutamate 189 to lysine 192 are interaction with GRK1.

This sequence belongs to the recoverin family. In terms of assembly, homodimer; disulfide-linked. Homodimerization is caused by prolonged intense illumination. May form a complex composed of RHO, GRK1 and RCVRN in a Ca(2+)-dependent manner; RCVRN prevents the interaction between GRK1 and RHO. Interacts (via C-terminus) with GRK1 (via N-terminus); the interaction is Ca(2+)-dependent. In terms of processing, the N-terminal glycine is linked to one of four different types of acyl groups. The most abundant is myristoleate (14:1), but 14:0, 14:2, and 12:0 acyl residues are also present. The Ca(2+) induced exposure of the myristoyl group, known as the calcium-myristoyl switch, promotes RCVRN binding to the photoreceptor cell membranes only when intracellular Ca(2+) concentration is high. Oxidation on Cys-39 occurs in response to prolonged intense illumination and results in the formation of disulfide homodimers, and to a lesser extent disulfide-linked heterodimers.

The protein localises to the photoreceptor inner segment. It is found in the cell projection. Its subcellular location is the cilium. The protein resides in the photoreceptor outer segment. It localises to the photoreceptor outer segment membrane. The protein localises to the perikaryon. Its function is as follows. Acts as a calcium sensor and regulates phototransduction of cone and rod photoreceptor cells. Modulates light sensitivity of cone photoreceptor in dark and dim conditions. In response to high Ca(2+) levels induced by low light levels, prolongs RHO/rhodopsin activation in rod photoreceptor cells by binding to and inhibiting GRK1-mediated phosphorylation of RHO/rhodopsin. Plays a role in scotopic vision/enhances vision in dim light by enhancing signal transfer between rod photoreceptors and rod bipolar cells. Improves rod photoreceptor sensitivity in dim light and mediates response of rod photoreceptors to facilitate detection of change and motion in bright light. The sequence is that of Recoverin (RCVRN) from Canis lupus familiaris (Dog).